Here is a 405-residue protein sequence, read N- to C-terminus: Aurora kinase A (405 aa).

Composition is skewed to polar residues over residues 32–82 (VPSQ…QLQA) and 91–110 (RSLN…PGNN). A disordered region spans residues 32 to 127 (VPSQNPLSAN…KQKNEESKKR (96 aa)). A phosphoserine mark is found at serine 42 and serine 52. Residues 111 to 127 (SEKELATKQKNEESKKR) show a composition bias toward basic and acidic residues. Residues 134 to 384 (FEIGRPLGKG…LKDVLEHPWI (251 aa)) enclose the Protein kinase domain. ATP contacts are provided by residues lysine 144, lysine 163, and 212-214 (EYA). Aspartate 257 (proton acceptor) is an active-site residue. Lysine 259 participates in a covalent cross-link: Glycyl lysine isopeptide (Lys-Gly) (interchain with G-Cter in SUMO2). ATP is bound by residues 261 to 262 (EN) and aspartate 275. The interval 281–294 (HAPSSRRTTLCGTL) is activation segment. Threonine 288 and threonine 289 each carry phosphothreonine. Position 343 is a phosphoserine (serine 343). A disordered region spans residues 385–405 (MANSSKPSSSQKSKDSTSKQS). Residues 396–405 (KSKDSTSKQS) show a composition bias toward basic and acidic residues.

This sequence belongs to the protein kinase superfamily. Ser/Thr protein kinase family. Aurora subfamily. Part of a complex composed of NEDD9, AURKA and CTTN; within the complex NEDD9 acts as a scaffold protein and is required for complex formation. Identified in a complex with AUNIP and NIN. Interacts with FBXL7. Interacts with CPEB1, JTB, TACC1, TPX2, PPP2CA, as well as with the protein phosphatase type 1 (PP1) isoforms PPP1CA, PPP1CB and PPP1CC. Also interacts with its substrates ARHGEF2, BORA, KIF2A, PARD3, and p53/TP53. Interaction with BORA promotes phosphorylation of PLK1. Interacts with CIMAP3. Interacts with GADD45A, competing with its oligomerization. Interacts (via C-terminus) with AUNIP (via C-terminus). Interacts with FRY; this interaction facilitates AURKA-mediated PLK1 phosphorylation. Interacts with SIRT2. Interacts with MYCN; interaction is phospho-independent and triggers AURKA activation; AURKA competes with FBXW7 for binding to unphosphorylated MYCN but not for binding to phosphorylated MYCN. Interacts with HNRNPU. Interacts with AAAS. Interacts with KLHL18 and CUL3. Interacts with FOXP1. Interacts with HDAC6; AURKA-mediated phosphorylation of HDAC6 promotes deacetylation of alpha-tubulin. In terms of processing, activated by phosphorylation at Thr-289; this brings about a change in the conformation of the activation segment. Phosphorylation at Thr-289 varies during the cell cycle and is highest during M phase. Autophosphorylated at Thr-289 upon TPX2 binding. Thr-289 can be phosphorylated by several kinases, including PAK and PKA. Protein phosphatase type 1 (PP1) binds AURKA and inhibits its activity by dephosphorylating Thr-289 during mitosis. Phosphorylation at Ser-343 decreases the kinase activity. PPP2CA controls degradation by dephosphorylating Ser-52 at the end of mitosis. Post-translationally, ubiquitinated by the E3 ubiquitin-protein ligase complex SCF(FBXL7) during mitosis, leading to its degradation by the proteasome. Ubiquitinated by CHFR, leading to its degradation by the proteasome. Ubiquitinated by the anaphase-promoting complex (APC), leading to its degradation by the proteasome. Ubiquitinated by the CUL3-KLHL18 ligase leading to its activation at the centrosome which is required for initiating mitotic entry. Ubiquitination mediated by CUL3-KLHL18 ligase does not lead to its degradation by the proteasome.

The protein resides in the cytoplasm. It is found in the cytoskeleton. It localises to the microtubule organizing center. The protein localises to the centrosome. Its subcellular location is the spindle pole. The protein resides in the centriole. It is found in the cell projection. It localises to the neuron projection. The protein localises to the cilium. Its subcellular location is the cilium basal body. The protein resides in the basolateral cell membrane. It carries out the reaction L-seryl-[protein] + ATP = O-phospho-L-seryl-[protein] + ADP + H(+). The catalysed reaction is L-threonyl-[protein] + ATP = O-phospho-L-threonyl-[protein] + ADP + H(+). Its activity is regulated as follows. Activation of CDK1, appears to be an upstream event of AURKA activation. Phosphatase inhibitor-2 (PPP1R2) and TPX2 act also as activators. Inactivated by the G2 checkpoint. Inhibited by GADD45A and p53/TP53, and through dephosphorylation by protein phosphatase type 1 (PP1). MLN8054 is also a potent and selective inhibitor. Activated during the early phase of cilia disassembly in the presence of CIMAP3. Inhibited by the small molecule inhibitor VX-680. Functionally, mitotic serine/threonine kinase that contributes to the regulation of cell cycle progression. Associates with the centrosome and the spindle microtubules during mitosis and plays a critical role in various mitotic events including the establishment of mitotic spindle, centrosome duplication, centrosome separation as well as maturation, chromosomal alignment, spindle assembly checkpoint, and cytokinesis. Required for normal spindle positioning during mitosis and for the localization of NUMA1 and DCTN1 to the cell cortex during metaphase. Required for initial activation of CDK1 at centrosomes. Phosphorylates numerous target proteins, including ARHGEF2, BORA, BRCA1, CDC25B, DLGP5, HDAC6, KIF2A, LATS2, NDEL1, PARD3, PPP1R2, PLK1, RASSF1, TACC3, p53/TP53 and TPX2. Phosphorylates MCRS1 which is required for MCRS1-mediated kinetochore fiber assembly and mitotic progression. Regulates KIF2A tubulin depolymerase activity. Important for microtubule formation and/or stabilization. Required for normal axon formation. Plays a role in microtubule remodeling during neurite extension. Also acts as a key regulatory component of the p53/TP53 pathway, and particularly the checkpoint-response pathways critical for oncogenic transformation of cells, by phosphorylating and destabilizing p53/TP53. Phosphorylates its own inhibitors, the protein phosphatase type 1 (PP1) isoforms, to inhibit their activity. Inhibits cilia outgrowth. Required for cilia disassembly via phosphorylation of HDAC6 and subsequent deacetylation of alpha-tubulin. Regulates protein levels of the anti-apoptosis protein BIRC5 by suppressing the expression of the SCF(FBXL7) E3 ubiquitin-protein ligase substrate adapter FBXL7 through the phosphorylation of the transcription factor FOXP1. This is Aurora kinase A from Canis lupus familiaris (Dog).